Here is a 187-residue protein sequence, read N- to C-terminus: Peptidyl-tRNA hydrolase (187 aa).

Tyrosine 15 is a tRNA binding site. The Proton acceptor role is filled by histidine 20. The tRNA site is built by phenylalanine 65, asparagine 67, and asparagine 113.

The protein belongs to the PTH family. In terms of assembly, monomer.

It localises to the cytoplasm. The enzyme catalyses an N-acyl-L-alpha-aminoacyl-tRNA + H2O = an N-acyl-L-amino acid + a tRNA + H(+). Hydrolyzes ribosome-free peptidyl-tRNAs (with 1 or more amino acids incorporated), which drop off the ribosome during protein synthesis, or as a result of ribosome stalling. Functionally, catalyzes the release of premature peptidyl moieties from peptidyl-tRNA molecules trapped in stalled 50S ribosomal subunits, and thus maintains levels of free tRNAs and 50S ribosomes. The polypeptide is Peptidyl-tRNA hydrolase (Elusimicrobium minutum (strain Pei191)).